The primary structure comprises 264 residues: MIVVKIGGRVVKNSLDKVILDIANINDKVILVHGGGDIVTDYTKRLGIEPVFVTSPEGIRSRYTTKEELEVYIMAMSLINKMITSKLCSLGKNAIGITGADGGLLLAERKKRIIVIDERGKKRIIEGGYTGKVKEVRSEVINHLMKLFDIIVVSPLALDVEESTPLNIDGDQAAFAISKAVKVNVLVILSDVEGVLVEGKVVDRLTPEEAKELSKKIGPGMNRKLLMAAESVENGVNKVIIGSGVKDRPVSSALELNGTVIVNG.

Substrate-binding positions include 35–36, arginine 62, and asparagine 167; that span reads GG.

This sequence belongs to the acetylglutamate kinase family. LysZ subfamily.

Its subcellular location is the cytoplasm. It catalyses the reaction [amino-group carrier protein]-C-terminal-N-(1,4-dicarboxybutan-1-yl)-L-glutamine + ATP = [amino-group carrier protein]-C-terminal-N-(1-carboxy-5-phosphooxy-5-oxopentan-1-yl)-L-glutamine + ADP. The enzyme catalyses [amino-group carrier protein]-C-terminal-gamma-(L-glutamyl)-L-glutamate + ATP = [amino-group carrier protein]-C-terminal-gamma-(5-phospho-L-glutamyl)-L-glutamate + ADP. Its pathway is amino-acid biosynthesis; L-lysine biosynthesis via AAA pathway; L-lysine from L-alpha-aminoadipate (Thermus route): step 2/5. It participates in amino-acid biosynthesis; L-arginine biosynthesis. Its function is as follows. Involved in both the arginine and lysine biosynthetic pathways. Phosphorylates the LysW-bound precursors glutamate (for arginine biosynthesis), respectively alpha-aminoadipate (for lysine biosynthesis). The sequence is that of [LysW]-aminoadipate/[LysW]-glutamate kinase from Saccharolobus islandicus (strain Y.N.15.51 / Yellowstone #2) (Sulfolobus islandicus).